The sequence spans 64 residues: Large ribosomal subunit protein bL35 (64 aa).

Over residues 1-14 (MKNKTHKGTAKRVK) the composition is skewed to basic residues. The disordered stretch occupies residues 1–29 (MKNKTHKGTAKRVKVTGSGKLVREQANRR).

It belongs to the bacterial ribosomal protein bL35 family.

This is Large ribosomal subunit protein bL35 from Corynebacterium glutamicum (strain R).